The chain runs to 170 residues: Cyclic dof factor 4 (170 aa).

The tract at residues 25–51 (NEEETHPPEQEATIAVRSSSSSDLTAE) is disordered. Residues 58–112 (IACPRCKSMETKFCYFNNYNVNQPRHFCKGCHRYWTAGGALRNVPVGAGRRKSKP) form a Dof-type zinc finger. Zn(2+)-binding residues include Cys-60, Cys-63, Cys-85, and Cys-88.

Expressed in the vasculature of cotyledons and hypocotyls, leaves and roots.

The protein localises to the nucleus. Transcription factor that binds specifically to a 5'-AA[AG]G-3' consensus core sequence. Transcriptional repressor of 'CONSTANS' expression. Regulates a photoperiodic flowering response. The chain is Cyclic dof factor 4 (CDF4) from Arabidopsis thaliana (Mouse-ear cress).